A 572-amino-acid chain; its full sequence is Proline--tRNA ligase (572 aa).

The protein belongs to the class-II aminoacyl-tRNA synthetase family. ProS type 1 subfamily. In terms of assembly, homodimer.

It localises to the cytoplasm. It catalyses the reaction tRNA(Pro) + L-proline + ATP = L-prolyl-tRNA(Pro) + AMP + diphosphate. Functionally, catalyzes the attachment of proline to tRNA(Pro) in a two-step reaction: proline is first activated by ATP to form Pro-AMP and then transferred to the acceptor end of tRNA(Pro). As ProRS can inadvertently accommodate and process non-cognate amino acids such as alanine and cysteine, to avoid such errors it has two additional distinct editing activities against alanine. One activity is designated as 'pretransfer' editing and involves the tRNA(Pro)-independent hydrolysis of activated Ala-AMP. The other activity is designated 'posttransfer' editing and involves deacylation of mischarged Ala-tRNA(Pro). The misacylated Cys-tRNA(Pro) is not edited by ProRS. The sequence is that of Proline--tRNA ligase from Salmonella arizonae (strain ATCC BAA-731 / CDC346-86 / RSK2980).